An 859-amino-acid polypeptide reads, in one-letter code: Sulfate permease 1 (859 aa).

2 N-linked (GlcNAc...) asparagine glycosylation sites follow: Asn-51 and Asn-93. 8 helical membrane passes run 94 to 114 (LTAK…KWFP), 116 to 136 (YNFT…CVLV), 148 to 168 (LSPE…SLFA), 173 to 193 (VCIG…AEVL), 206 to 226 (PIIA…LGIL), 234 to 254 (LISL…IIWG), 292 to 312 (FGLI…TFGI), and 332 to 352 (FYFY…TAIS). Residues Asn-358 and Asn-391 are each glycosylated (N-linked (GlcNAc...) asparagine). 4 helical membrane passes run 395–415 (EIPA…KSFG), 428–448 (LIAI…PATG), 468–488 (VFTG…FFFI), and 525–545 (FIVT…YFAM). 3 N-linked (GlcNAc...) asparagine glycosylation sites follow: Asn-630, Asn-653, and Asn-718. Residues 630–808 (NTTVRPPPPG…SIIAGHSSFH (179 aa)) enclose the STAS domain.

This sequence belongs to the SLC26A/SulP transporter (TC 2.A.53) family.

Its subcellular location is the membrane. High affinity uptake of sulfate into the cell. The polypeptide is Sulfate permease 1 (SUL1) (Saccharomyces cerevisiae (strain ATCC 204508 / S288c) (Baker's yeast)).